The chain runs to 106 residues: Gas vesicle protein J (106 aa).

Belongs to the gas vesicle GvpA family.

Its subcellular location is the gas vesicle. In terms of biological role, a minor component of the gas vesicle, might be involved in nucleating gas vesicle formation. Gas vesicles are hollow, gas filled proteinaceous nanostructures found in some microorganisms. It is not clear what function gas vesicles perform in soil bacteria. This Streptomyces sp. (strain CB03234) protein is Gas vesicle protein J.